The sequence spans 507 residues: Tryptophan aminotransferase-related protein 2 (507 aa).

The tract at residues 91-135 (PPPHHHHHDAGLATRSSDAAVHRRARTASSMAPSTGKPAVTTDSV) is disordered. Pyridoxal 5'-phosphate contacts are provided by residues Y169, 211-212 (ST), N282, 304-307 (DLAY), 327-330 (TVSK), and R338. K330 carries the N6-(pyridoxal phosphate)lysine modification.

This sequence belongs to the alliinase family. Pyridoxal 5'-phosphate is required as a cofactor. As to expression, widely expressed.

The catalysed reaction is L-tryptophan + 2-oxoglutarate = indole-3-pyruvate + L-glutamate. It participates in plant hormone metabolism; auxin biosynthesis. Probable tryptophan aminotransferase involved in auxin (IAA) biosynthesis. Required for auxin production to initiate multiple change in growth in response to environmental and developmental cues. Functions upstream of YUCCA1 in auxin biosynthesis. Required for polar auxin transport. This Oryza sativa subsp. japonica (Rice) protein is Tryptophan aminotransferase-related protein 2.